A 466-amino-acid polypeptide reads, in one-letter code: uncharacterized protein (466 aa).

Residues 178 to 466 (SQGSASSMWM…QGMLGVKYSW (289 aa)) form the Autotransporter domain.

This is an uncharacterized protein from Escherichia coli (strain K12).